Consider the following 475-residue polypeptide: Methyltransferase-like protein 25B (475 aa).

Residues 186-210 are a coiled coil; the sequence is QRLVERAQRLDQELLQTLEKEEKRN. A helical membrane pass occupies residues 406-426; sequence VVAFFSLALLLAPLVETLILL.

This sequence belongs to the METTL25 family.

The protein resides in the membrane. The polypeptide is Methyltransferase-like protein 25B (Bos taurus (Bovine)).